The chain runs to 282 residues: NH(3)-dependent NAD(+) synthetase (282 aa).

51–58 contributes to the ATP binding site; the sequence is GISGGVDS. D57 contributes to the Mg(2+) binding site. A deamido-NAD(+)-binding site is contributed by R148. Residue T168 coordinates ATP. Mg(2+) is bound at residue E173. Positions 181 and 188 each coordinate deamido-NAD(+). Positions 197 and 219 each coordinate ATP. 268–269 contacts deamido-NAD(+); that stretch reads HK.

The protein belongs to the NAD synthetase family. Homodimer.

The enzyme catalyses deamido-NAD(+) + NH4(+) + ATP = AMP + diphosphate + NAD(+) + H(+). Its pathway is cofactor biosynthesis; NAD(+) biosynthesis; NAD(+) from deamido-NAD(+) (ammonia route): step 1/1. In terms of biological role, catalyzes the ATP-dependent amidation of deamido-NAD to form NAD. Uses ammonia as a nitrogen source. This is NH(3)-dependent NAD(+) synthetase from Burkholderia cenocepacia (strain HI2424).